The following is a 294-amino-acid chain: 2-oxo-3-(phosphooxy)propyl 3-oxoalkanoate synthase (294 aa).

It belongs to the AfsA family.

The catalysed reaction is a medium-chain 3-oxoacyl-[ACP] + dihydroxyacetone phosphate = a (4-alkanoyl-5-oxo-2,5-dihydrofuran-3-yl)methyl phosphate + holo-[ACP] + H2O. Involved in the biosynthesis of virginiae butanolide (VB), a gamma-butyrolactone autoregulator that triggers the production of the streptogramin antibiotic virginiamycin. This is 2-oxo-3-(phosphooxy)propyl 3-oxoalkanoate synthase from Streptomyces virginiae (Streptomyces cinnamonensis).